The chain runs to 90 residues: Small ribosomal subunit protein bS6 (90 aa).

An Isoglutamyl lysine isopeptide (Lys-Gln) (interchain with Q-Cter in protein Pup) cross-link involves residue Lys-33.

The protein belongs to the bacterial ribosomal protein bS6 family.

In terms of biological role, binds together with bS18 to 16S ribosomal RNA. This chain is Small ribosomal subunit protein bS6 (rpsF), found in Mycolicibacterium smegmatis (strain ATCC 700084 / mc(2)155) (Mycobacterium smegmatis).